The chain runs to 204 residues: MRLSRRPETFLLAFVLLCTLLGLGCPLHCEICTAAGSRCHGQMKTCSSDKDTCVLLVGKATSKGKELVHTYKGCIRSQDCYSGVISTTMGPKDHMVTSSFCCQSDGCNSAFLSVPLTNLTENGLMCPACTASFRDKCMGPMTHCTGKENHCVSLSGHVQAGIFKPRFAMRGCATESMCFTKPGAEVPTGTNVLFLHHIECTHSP.

Residues 1–26 (MRLSRRPETFLLAFVLLCTLLGLGCP) form the signal peptide. In terms of domain architecture, UPAR/Ly6 spans 27–117 (LHCEICTAAG…NSAFLSVPLT (91 aa)). 7 disulfides stabilise this stretch: Cys-29/Cys-53, Cys-32/Cys-39, Cys-46/Cys-74, Cys-80/Cys-101, Cys-102/Cys-107, Cys-126/Cys-151, and Cys-144/Cys-172.

It belongs to the CNF-like-inhibitor family.

The protein resides in the secreted. In Homo sapiens (Human), this protein is phospholipase A2 inhibitor and Ly6/PLAUR domain-containing protein (PINLYP).